The primary structure comprises 222 residues: Peptide methionine sulfoxide reductase MsrA (222 aa).

C60 is a catalytic residue.

Belongs to the MsrA Met sulfoxide reductase family.

The enzyme catalyses L-methionyl-[protein] + [thioredoxin]-disulfide + H2O = L-methionyl-(S)-S-oxide-[protein] + [thioredoxin]-dithiol. It catalyses the reaction [thioredoxin]-disulfide + L-methionine + H2O = L-methionine (S)-S-oxide + [thioredoxin]-dithiol. Its function is as follows. Has an important function as a repair enzyme for proteins that have been inactivated by oxidation. Catalyzes the reversible oxidation-reduction of methionine sulfoxide in proteins to methionine. The chain is Peptide methionine sulfoxide reductase MsrA from Pseudomonas entomophila (strain L48).